Here is a 310-residue protein sequence, read N- to C-terminus: Putative RING-H2 finger protein ATL53 (310 aa).

A helical transmembrane segment spans residues 62–82 (VIAIFGIFATAFLLAAYYTLV). The RING-type; atypical zinc finger occupies 155–197 (CSICLGEFNEDESLRLLPKCNHTFHVVCIDRWLKSHSNCPLCR).

Belongs to the RING-type zinc finger family. ATL subfamily.

Its subcellular location is the membrane. It catalyses the reaction S-ubiquitinyl-[E2 ubiquitin-conjugating enzyme]-L-cysteine + [acceptor protein]-L-lysine = [E2 ubiquitin-conjugating enzyme]-L-cysteine + N(6)-ubiquitinyl-[acceptor protein]-L-lysine.. It functions in the pathway protein modification; protein ubiquitination. The sequence is that of Putative RING-H2 finger protein ATL53 (ATL53) from Arabidopsis thaliana (Mouse-ear cress).